The primary structure comprises 156 residues: ATP synthase subunit b (156 aa).

A helical membrane pass occupies residues 7 to 27 (LIGQAIWFALFVFFCMKFVWP).

It belongs to the ATPase B chain family. F-type ATPases have 2 components, F(1) - the catalytic core - and F(0) - the membrane proton channel. F(1) has five subunits: alpha(3), beta(3), gamma(1), delta(1), epsilon(1). F(0) has three main subunits: a(1), b(2) and c(10-14). The alpha and beta chains form an alternating ring which encloses part of the gamma chain. F(1) is attached to F(0) by a central stalk formed by the gamma and epsilon chains, while a peripheral stalk is formed by the delta and b chains.

It localises to the cell inner membrane. Its function is as follows. F(1)F(0) ATP synthase produces ATP from ADP in the presence of a proton or sodium gradient. F-type ATPases consist of two structural domains, F(1) containing the extramembraneous catalytic core and F(0) containing the membrane proton channel, linked together by a central stalk and a peripheral stalk. During catalysis, ATP synthesis in the catalytic domain of F(1) is coupled via a rotary mechanism of the central stalk subunits to proton translocation. Functionally, component of the F(0) channel, it forms part of the peripheral stalk, linking F(1) to F(0). The polypeptide is ATP synthase subunit b (Alcanivorax borkumensis (strain ATCC 700651 / DSM 11573 / NCIMB 13689 / SK2)).